We begin with the raw amino-acid sequence, 165 residues long: Pro-MCH (165 aa).

Positions 1 to 21 are cleaved as a signal peptide; that stretch reads MAKMNLSSYILILTFSLFSQG. I143 carries the post-translational modification Isoleucine amide. C153 and C162 are disulfide-bonded.

This sequence belongs to the melanin-concentrating hormone family. In terms of processing, differentially processed in the brain and in peripheral organs producing two neuropeptides; NEI and MCH. A third peptide, NGE, may also be produced. Preferential processing in neurons by prohormone convertase 2 (PC2) generates NEI. MCH is generated in neurons of the lateral hypothalmic area by several prohormone convertases including PC1/3, PC2 and PC5/6. In terms of tissue distribution, predominantly expressed in lateral hypothalamus, also detected in pallidum, neocortex and cerebellum. Also found in thymus, brown adipose tissue, duodenum and testis (spermatogonia, early spermatocytes and Sertoli cells). No expression in peripheral blood. In brain exclusively mature MCH and NEI peptides are present. In peripheral tissues a large product, encompassing the NEI and MCH domains of the precursor, is found predominantly.

It localises to the secreted. MCH may act as a neurotransmitter or neuromodulator in a broad array of neuronal functions directed toward the regulation of goal-directed behavior, such as food intake, and general arousal. May also have a role in spermatocyte differentiation. The polypeptide is Pro-MCH (PMCH) (Homo sapiens (Human)).